The sequence spans 151 residues: Putative UPF0320 protein YFL063W (151 aa).

The protein belongs to the UPF0320 family.

The sequence is that of Putative UPF0320 protein YFL063W from Saccharomyces cerevisiae (strain ATCC 204508 / S288c) (Baker's yeast).